Here is a 559-residue protein sequence, read N- to C-terminus: Mercuric reductase (559 aa).

Residues 1-64 (MYLNITGMTC…AVAGLGYKAT (64 aa)) form the HMA domain. A metal cation contacts are provided by cysteine 10 and cysteine 13. Residues alanine 108, glycine 128, and threonine 133 each coordinate FAD. Cysteine 134 and cysteine 139 are disulfide-bonded. Residues lysine 143, alanine 209, aspartate 401, and valine 409 each contribute to the FAD site. Residues cysteine 556 and cysteine 557 each contribute to the Hg(2+) site.

It belongs to the class-I pyridine nucleotide-disulfide oxidoreductase family. In terms of assembly, homodimer. FAD is required as a cofactor.

The enzyme catalyses Hg + NADP(+) + H(+) = Hg(2+) + NADPH. In terms of biological role, resistance to Hg(2+) in bacteria appears to be governed by a specialized system which includes mercuric reductase. MerA protein is responsible for volatilizing mercury as Hg(0). In Alcaligenes sp, this protein is Mercuric reductase (merA).